The primary structure comprises 254 residues: Peroxisomal membrane protein 11-2 (254 aa).

The Cytoplasmic portion of the chain corresponds to 1–113; the sequence is MVTAAGSPSS…YHPHPHVHPL (113 aa). Residues 114 to 134 form a helical membrane-spanning segment; that stretch reads LVLLAYGGQGVYNFLEQFAWL. At 135–227 the chain is on the lumenal side; that stretch reads AKAGLLPARL…TVGDVTGRKG (93 aa). A helical membrane pass occupies residues 228 to 247; sequence LLGSSTLMASAGLLSALISV. The Cytoplasmic segment spans residues 248-254; the sequence is HKNWNSC.

Belongs to the peroxin-11 family.

The protein localises to the peroxisome membrane. In terms of biological role, involved in peroxisomal proliferation. This Oryza sativa subsp. japonica (Rice) protein is Peroxisomal membrane protein 11-2 (PEX11-2).